The primary structure comprises 206 residues: Uridine kinase (206 aa).

Position 11–18 (Gly-11–Ser-18) interacts with ATP.

It belongs to the uridine kinase family.

Its subcellular location is the cytoplasm. The catalysed reaction is uridine + ATP = UMP + ADP + H(+). It carries out the reaction cytidine + ATP = CMP + ADP + H(+). It participates in pyrimidine metabolism; CTP biosynthesis via salvage pathway; CTP from cytidine: step 1/3. The protein operates within pyrimidine metabolism; UMP biosynthesis via salvage pathway; UMP from uridine: step 1/1. The chain is Uridine kinase from Clostridium botulinum (strain 657 / Type Ba4).